We begin with the raw amino-acid sequence, 389 residues long: 1-deoxy-D-xylulose 5-phosphate reductoisomerase (389 aa).

6 residues coordinate NADPH: Ser11, Gly12, Ser13, Val14, Asn39, and Asn122. A 1-deoxy-D-xylulose 5-phosphate-binding site is contributed by Lys123. Glu124 lines the NADPH pocket. Asp148 serves as a coordination point for Mn(2+). 4 residues coordinate 1-deoxy-D-xylulose 5-phosphate: Ser149, Glu150, Ser174, and His197. Position 150 (Glu150) interacts with Mn(2+). Gly203 provides a ligand contact to NADPH. Positions 210, 215, 216, and 219 each coordinate 1-deoxy-D-xylulose 5-phosphate. A Mn(2+)-binding site is contributed by Glu219.

The protein belongs to the DXR family. Mg(2+) is required as a cofactor. Mn(2+) serves as cofactor.

It carries out the reaction 2-C-methyl-D-erythritol 4-phosphate + NADP(+) = 1-deoxy-D-xylulose 5-phosphate + NADPH + H(+). It participates in isoprenoid biosynthesis; isopentenyl diphosphate biosynthesis via DXP pathway; isopentenyl diphosphate from 1-deoxy-D-xylulose 5-phosphate: step 1/6. Catalyzes the NADPH-dependent rearrangement and reduction of 1-deoxy-D-xylulose-5-phosphate (DXP) to 2-C-methyl-D-erythritol 4-phosphate (MEP). This Leptospira interrogans serogroup Icterohaemorrhagiae serovar Lai (strain 56601) protein is 1-deoxy-D-xylulose 5-phosphate reductoisomerase.